The sequence spans 569 residues: MFLEIILDSATYSFDRVITGKICFETNAATSPRSFQIQLRIKGYAVYHHGFLSSPSHKHPTTASASDSDEATEIFTHSQPLPIPAGPSSKSHAIDFKFKFPSKSASSLPCSKSNDSMVNICYMLKATISKRYAFLGSSQSAKAELIMVPPNLAGKPLSANSSFGSSAKTFQLPEFDSVTPSASLYKQPSFNSNPAPITTSSATHTSQFSTSSSSSVNSVHTPVMVPNPYFQYNSSMTAPSSSSSSVAPFVPRRQFSVSSASDPPQTPISMSPPIPPTPSQFSAFMYQNQQSYLSPQSHYENPLSISSRPSPCCPSTPSSAVTLSNGFDSQSNAYNNSGTGPPMLYKFPQRSYTAPNTSFNSQRRMSSITSLPTASFCPVKHGVSPPSLAGNQPSPLSSPLTNSNVSPSTICSPDNNVTFVNLAPGEKLTFKIEPNDLMDEEEVVENSNMYSIPGKTVATTVCHSSSSSGDFSALSCHRNLSFSESLPTAEDQVHNNHCAVSPSRRSSSNALYLATLPMGYERSNSVSYCSDSSLSSPLPDDNMLQDPHALNMAYAKEFDVLINEVLQSL.

Disordered stretches follow at residues 195-219 and 255-274; these read APITTSSATHTSQFSTSSSSSVNSV and FSVSSASDPPQTPISMSPPI. Residues 198 to 219 show a composition bias toward low complexity; sequence TTSSATHTSQFSTSSSSSVNSV. Positions 264 to 274 are enriched in pro residues; it reads PQTPISMSPPI.

It belongs to the arrestin family.

Functionally, has a role in promoting meiosis whereby it is involved in establishing the mating pheromone signaling pathway. It also has a role in suppressing meiosis until the conjugation process is complete. The polypeptide is Protein ste7 (ste7) (Schizosaccharomyces pombe (strain 972 / ATCC 24843) (Fission yeast)).